Here is a 331-residue protein sequence, read N- to C-terminus: Centriolar satellite-associated tubulin polyglutamylase complex regulator 1 (331 aa).

Residues 1–111 are required for interaction with PCM1; it reads MLSPERLALP…HCLLQLLCPD (111 aa). Residues 1–225 form a required for interaction with TPGS1, LRRC49, and TTLL1 region; that stretch reads MLSPERLALP…SCPPPALVKE (225 aa). Positions 112 to 331 are required for interaction with TPGS2; sequence FPLELTQKAA…STEETDESET (220 aa). The tract at residues 292-331 is disordered; it reads SCLPSRTPPRVGSPWKPLHRSRKLDAESDGSTEETDESET. The segment covering 318-331 has biased composition (acidic residues); the sequence is ESDGSTEETDESET. Ser-319 bears the Phosphoserine mark.

Belongs to the CSTPP1 family. As to quaternary structure, interacts with PCM1. Interacts with TTLL1, TPGS1, TPGS2 and LRRC49; the interactions link CSTPP1 to the complex TPGC. Binds to alpha-tubulin.

The protein localises to the cytoplasm. It is found in the cytoskeleton. The protein resides in the microtubule organizing center. It localises to the centrosome. Its subcellular location is the centriolar satellite. Its function is as follows. Regulator of the tubulin polyglutamylase complex (TPGC) that controls cytoskeletal organization, nuclear shape, and cilium disassembly by balancing microtubule and actin assembly. Regulates the assembly and stability of the TPGC and thereby modulates polyglutamylation of the microtubule, which antagonizes MAP4 binding. The protein is Centriolar satellite-associated tubulin polyglutamylase complex regulator 1 of Mus musculus (Mouse).